Here is a 333-residue protein sequence, read N- to C-terminus: Protoheme IX farnesyltransferase (333 aa).

The next 8 membrane-spanning stretches (helical) occupy residues 63–83, 109–129, 132–152, 160–180, 188–208, 214–234, 245–265, and 292–312; these read LACTLGGGALAAAAAGVLNCI, AAFIGAISCTLAAAALLVSGV, LAAGLSLLGLCSYVLLYTAIL, IVIGGVAGAIPPLVGAAAASG, WLFSLVMLWTPAHFWALALLL, AVGIPMLPVIQGPVVTVRAIS, GFGVWALPEGGLLYGLLLIPF, and WSIFYMFGICLLLVVSRLPMA.

Belongs to the UbiA prenyltransferase family. Protoheme IX farnesyltransferase subfamily.

The protein localises to the cell inner membrane. It carries out the reaction heme b + (2E,6E)-farnesyl diphosphate + H2O = Fe(II)-heme o + diphosphate. It functions in the pathway porphyrin-containing compound metabolism; heme O biosynthesis; heme O from protoheme: step 1/1. Its function is as follows. Converts heme B (protoheme IX) to heme O by substitution of the vinyl group on carbon 2 of heme B porphyrin ring with a hydroxyethyl farnesyl side group. The sequence is that of Protoheme IX farnesyltransferase from Prochlorococcus marinus (strain MIT 9313).